Consider the following 420-residue polypeptide: Probable aminotransferase aclI (420 aa).

Residue K264 is modified to N6-(pyridoxal phosphate)lysine.

The protein belongs to the class-I pyridoxal-phosphate-dependent aminotransferase family. It depends on pyridoxal 5'-phosphate as a cofactor.

It functions in the pathway mycotoxin biosynthesis. Its function is as follows. Probable aminotransferase; part of the gene cluster that mediates the biosynthesis of aspirochlorine (or antibiotic A30641), an unusual halogenated spiro compound with distinctive antifungal properties due to selective inhibition of protein biosynthesis, and which is also active against bacteria, viruses, and murine tumor cells. The non-ribosomal peptide synthetase (NRPS) aclP is responsible the formation of the diketopiperazine (DKP) core from the condensation of 2 phenylalanine residues. One Phe residue is tailored into chlorotyrosine by hydroxylation and chlorination, whereas the second Phe undergoes an unprecedented C-C bond cleavage to be converted into glycine. After formation of the DKP, sulfur is incorporated into the DKP by conjugation with glutathione by aclG, followed by its stepwise degradation to the thiol by aclI, aclJ and aclK, and the dithiol oxidation by aclT. In addition, oxygenases (aclB, aclC, aclL and aclO) and O-methyltransferases (aclM and aclU) act as tailoring enzymes to produce the intermediate dechloroaspirochlorine. Ultimately, chlorination of dechloroaspirochlorine by the halogenase aclH is the last step in the aspirochlorine pathway. The polypeptide is Probable aminotransferase aclI (Aspergillus oryzae (strain ATCC 42149 / RIB 40) (Yellow koji mold)).